The following is a 2119-amino-acid chain: Outer kinetochore KNL1 complex subunit KNL1 (2119 aa).

The tract at residues 1-59 (MDGVYSEANEENDNTQRPVRRQHSSILKPPRSPLQDLKCGNQTNQEPNPPRKRKSSRRV) is disordered. The interval 1–202 (MDGVYSEANE…SDNFIKRLKT (202 aa)) is may mediate oligomerization. Interaction with microtubules regions lie at residues 17-34 (RPVRRQHSSILKPPRSPL) and 53-80 (RKSSRRVSFADTIKVFQTESHMKTERNS). The tract at residues 23-80 (HSSILKPPRSPLQDLKCGNQTNQEPNPPRKRKSSRRVSFADTIKVFQTESHMKTERNS) is interaction with PP1CA; contains the protein phosphatase 1 (PP1) interaction motifs SILK, RVXF and phi-phi. Ser24, Ser32, and Ser60 each carry phosphoserine. Residues 124–140 (ENQMDLTASHTVMITKG) are interaction with BUB1. The tract at residues 160 to 179 (ENLKHHAANSRIKKDLACST) is interaction with BUB1B. Phosphoserine is present on Ser538. Phosphothreonine is present on residues Thr540 and Thr739. Repeat 1 spans residues 723-827 (DKTILFSEGN…MTKSHTVFID (105 aa)). The segment at 723-1027 (DKTILFSEGN…VTRSHTVFID (305 aa)) is 2 X 104 AA approximate repeats. 2 positions are modified to phosphoserine: Ser794 and Ser878. Repeat 2 spans residues 923–1027 (KSITFPENDK…VTRSHTVFID (105 aa)). Ser1243 and Ser1464 each carry phosphoserine. A disordered region spans residues 1557 to 1583 (SQRESLPSENKTENCRAQKRTRVEEND). Residues 1566–1583 (NKTENCRAQKRTRVEEND) are compositionally biased toward basic and acidic residues. The Nuclear localization signal motif lies at 1577–1590 (TRVEENDVTNEKKI). Phosphoserine occurs at positions 1616, 1627, and 1642. A required for interaction with ZWINT region spans residues 1763-1890 (KVKDYSDEEL…FLEVETQKTQ (128 aa)). Positions 1799–1890 (VALYNKLVHS…FLEVETQKTQ (92 aa)) form a coiled coil. Residues 1873-2093 (EEEELQRKFL…GKTGHDEIAA (221 aa)) form an interaction with NSL1, DSN1 and required for assembly into the outer kinetochore region.

Component of the KNL1 complex composed of KNL1 and ZWINT. Part of the ten-subunit outer kinetochore KMN network that includes the KNL1, MIS12 and NDC80 complexes; a bioriented kinetochore contains approximately 150 copies of the network. Interacts (via C-terminus) with the MIS12 complex subunits NSL1 (via C-terminus), PMF1 and DSN1; the interaction is direct. Interacts (via N-terminal region) with BUB1B (via BUB1 N-terminal domain); the interaction is direct and is required for cell cycle arrest upon activation of the mitotic spindle assembly checkpoint. Interacts (via N-terminal region) with BUB1 (via BUB1 N-terminal domain); the interaction is direct. Interacts with the protein phosphatase PP1 subunit PPP1CA; the interaction is direct and mutually exclusive with binding to microtubules. Interacts with the protein phosphatase PP1 subunit PPP1CC; the interaction is direct and mutually exclusive with binding to microtubules. Phosphorylation by AURKB negatively regulates its interaction with protein phosphatase 1 (PP1) subunit PPP1CA and with microtubules. As to expression, expressed in oocytes during meiotic progression (at protein level). Expressed during spermatogenesis.

The protein localises to the nucleus. It localises to the chromosome. Its subcellular location is the centromere. It is found in the kinetochore. The protein resides in the cytoplasm. In terms of biological role, acts as a component of the outer kinetochore KNL1 complex that serves as a docking point for spindle assembly checkpoint components and mediates microtubule-kinetochore interactions. Kinetochores, consisting of a centromere-associated inner segment and a microtubule-contacting outer segment, play a crucial role in chromosome segregation by mediating the physical connection between centromeric DNA and spindle microtubules. The outer kinetochore is made up of the ten-subunit KMN network, comprising the MIS12, NDC80 and KNL1 complexes, and auxiliary microtubule-associated components; together they connect the outer kinetochore with the inner kinetochore, bind microtubules, and mediate interactions with mitotic checkpoint proteins that delay anaphase until chromosomes are bioriented on the spindle. Required for kinetochore binding by a distinct subset of kMAPs (kinetochore-bound microtubule-associated proteins) and motors. Acts in coordination with CENPK to recruit the NDC80 complex to the outer kinetochore. Can bind either to microtubules or to the protein phosphatase 1 (PP1) catalytic subunits PPP1CA and PPP1CC (via overlapping binding sites), it has higher affinity for PP1. Recruits MAD2L1 to the kinetochore and also directly links BUB1 and BUB1B to the kinetochore. In addition to orienting mitotic chromosomes, it is also essential for alignment of homologous chromosomes during meiotic metaphase I. In meiosis I, required to activate the spindle assembly checkpoint at unattached kinetochores to correct erroneous kinetochore-microtubule attachments. The protein is Outer kinetochore KNL1 complex subunit KNL1 of Mus musculus (Mouse).